We begin with the raw amino-acid sequence, 280 residues long: Large ribosomal subunit protein uL2cz/uL2cy (280 aa).

Disordered stretches follow at residues Met1–Asn25 and Pro231–Lys280.

The protein belongs to the universal ribosomal protein uL2 family. As to quaternary structure, part of the 50S ribosomal subunit.

The protein resides in the plastid. Its subcellular location is the chloroplast. This Platanus occidentalis (Sycamore) protein is Large ribosomal subunit protein uL2cz/uL2cy (rpl2-A).